Consider the following 191-residue polypeptide: UPF0149 protein VV1_1551 (191 aa).

This sequence belongs to the UPF0149 family.

The chain is UPF0149 protein VV1_1551 from Vibrio vulnificus (strain CMCP6).